The following is a 669-amino-acid chain: Acetyl-coenzyme A synthetase (669 aa).

Residues 211 to 214 (RGGK) and T329 each bind CoA. Residues 404-406 (GEP), 428-433 (DTYWQT), D519, and R534 contribute to the ATP site. S542 contributes to the CoA binding site. R545 is a binding site for ATP. R602 provides a ligand contact to CoA.

This sequence belongs to the ATP-dependent AMP-binding enzyme family.

The catalysed reaction is acetate + ATP + CoA = acetyl-CoA + AMP + diphosphate. Its pathway is ketone degradation; acetoin degradation. It participates in antibiotic biosynthesis; penicillin biosynthesis. The sequence is that of Acetyl-coenzyme A synthetase (facA) from Penicillium chrysogenum (Penicillium notatum).